The sequence spans 254 residues: Type III pantothenate kinase (254 aa).

7–14 (DVGNTRLK) is a binding site for ATP. Residues tyrosine 96 and 103–106 (GSDR) each bind substrate. Residue aspartate 105 is the Proton acceptor of the active site. Threonine 133 is a binding site for ATP. Substrate is bound at residue threonine 183.

The protein belongs to the type III pantothenate kinase family. In terms of assembly, homodimer. NH4(+) is required as a cofactor. Requires K(+) as cofactor.

It localises to the cytoplasm. It catalyses the reaction (R)-pantothenate + ATP = (R)-4'-phosphopantothenate + ADP + H(+). It participates in cofactor biosynthesis; coenzyme A biosynthesis; CoA from (R)-pantothenate: step 1/5. Functionally, catalyzes the phosphorylation of pantothenate (Pan), the first step in CoA biosynthesis. The sequence is that of Type III pantothenate kinase from Paracidovorax citrulli (strain AAC00-1) (Acidovorax citrulli).